The chain runs to 162 residues: NADH-quinone oxidoreductase subunit I (162 aa).

2 consecutive 4Fe-4S ferredoxin-type domains span residues 52–82 (LRRY…IEAG) and 93–122 (TRYD…EGPN). The [4Fe-4S] cluster site is built by Cys62, Cys65, Cys68, Cys72, Cys102, Cys105, Cys108, and Cys112.

This sequence belongs to the complex I 23 kDa subunit family. In terms of assembly, NDH-1 is composed of 14 different subunits. Subunits NuoA, H, J, K, L, M, N constitute the membrane sector of the complex. Requires [4Fe-4S] cluster as cofactor.

Its subcellular location is the cell inner membrane. The enzyme catalyses a quinone + NADH + 5 H(+)(in) = a quinol + NAD(+) + 4 H(+)(out). Its function is as follows. NDH-1 shuttles electrons from NADH, via FMN and iron-sulfur (Fe-S) centers, to quinones in the respiratory chain. The immediate electron acceptor for the enzyme in this species is believed to be ubiquinone. Couples the redox reaction to proton translocation (for every two electrons transferred, four hydrogen ions are translocated across the cytoplasmic membrane), and thus conserves the redox energy in a proton gradient. The protein is NADH-quinone oxidoreductase subunit I of Methylorubrum extorquens (strain PA1) (Methylobacterium extorquens).